The following is a 306-amino-acid chain: Plant-type L-asparaginase (306 aa).

Thr-176 (nucleophile) is an active-site residue. Residues 203–206 (RVGD) and 225–228 (TGLG) contribute to the substrate site.

The protein belongs to the Ntn-hydrolase family. As to quaternary structure, heterotetramer of two alpha and two beta chains arranged as a dimer of alpha/beta heterodimers. The uncleaved protein forms homodimers. Post-translationally, autocleaved. Generates the alpha and beta subunits. The N-terminal residue of the beta subunit is thought to be responsible for the nucleophile hydrolase activity. Predominantly produced in the uncleaved form when gene expression is induced at 37 degrees Celsius with 0.5 mM IPTG. When produced at 42 degrees Celsius without adding IPTG, approximately 90% of the protein is found in the cleaved form, while the remaining 10% is observed as uncleaved precursor. Undergoes complete auto-cleavage within 24 hours at 37 degrees Celsius.

It carries out the reaction L-asparagine + H2O = L-aspartate + NH4(+). Its activity is regulated as follows. Undergoes auto-cleavage in a temperature-dependent and glycine-independent manner. Metal ions and EDTA do not have any significant effect on enzyme activity, indicating that activity is metal-independent. Its function is as follows. Catalyzes the hydrolysis of L-asparagine into L-aspartate and ammonia. Also displays D-asparaginase activity, which is about 10% of the L-asparaginase activity. Does not exhibit glutaminase activity. This Thermococcus kodakarensis (strain ATCC BAA-918 / JCM 12380 / KOD1) (Pyrococcus kodakaraensis (strain KOD1)) protein is Plant-type L-asparaginase.